A 204-amino-acid polypeptide reads, in one-letter code: Thymidine kinase (204 aa).

Residues Gly18–Thr25 and Asp91–Gln94 each bind ATP. The active-site Proton acceptor is the Glu92. Positions 148, 151, 180, and 183 each coordinate Zn(2+).

Belongs to the thymidine kinase family. In terms of assembly, homotetramer.

The protein resides in the cytoplasm. It catalyses the reaction thymidine + ATP = dTMP + ADP + H(+). The sequence is that of Thymidine kinase from Bdellovibrio bacteriovorus (strain ATCC 15356 / DSM 50701 / NCIMB 9529 / HD100).